A 932-amino-acid chain; its full sequence is Lon protease homolog 2, peroxisomal (932 aa).

Residues 11-260 form the Lon N-terminal domain; that stretch reads LSLVPLPKGS…RVVDILNKQN (250 aa). The disordered stretch occupies residues 298-328; sequence RRGIPGASGTPPPGLGGRNNEADEKESNELD. Positions 317–328 are enriched in basic and acidic residues; sequence NEADEKESNELD. 486 to 493 is an ATP binding site; the sequence is GPPGTGKT. Residues 729 to 916 form the Lon proteolytic domain; that stretch reads HGRPGVVTGL…WEAIRHIWPD (188 aa). Residues serine 822 and lysine 865 contribute to the active site. The Microbody targeting signal signature appears at 930–932; that stretch reads SRL.

It belongs to the peptidase S16 family.

The protein resides in the peroxisome matrix. It carries out the reaction Hydrolysis of proteins in presence of ATP.. Functionally, ATP-dependent serine protease that mediates the selective degradation of misfolded and unassembled polypeptides in the peroxisomal matrix. Necessary for type 2 peroxisome targeting signal (PTS2)-containing protein processing and facilitates peroxisome matrix protein import. This chain is Lon protease homolog 2, peroxisomal, found in Emericella nidulans (strain FGSC A4 / ATCC 38163 / CBS 112.46 / NRRL 194 / M139) (Aspergillus nidulans).